Reading from the N-terminus, the 121-residue chain is Large ribosomal subunit protein eL34A (121 aa).

It belongs to the eukaryotic ribosomal protein eL34 family. In terms of assembly, component of the large ribosomal subunit (LSU). Mature yeast ribosomes consist of a small (40S) and a large (60S) subunit. The 40S small subunit contains 1 molecule of ribosomal RNA (18S rRNA) and 33 different proteins (encoded by 57 genes). The large 60S subunit contains 3 rRNA molecules (25S, 5.8S and 5S rRNA) and 46 different proteins (encoded by 81 genes).

The protein localises to the cytoplasm. Component of the ribosome, a large ribonucleoprotein complex responsible for the synthesis of proteins in the cell. The small ribosomal subunit (SSU) binds messenger RNAs (mRNAs) and translates the encoded message by selecting cognate aminoacyl-transfer RNA (tRNA) molecules. The large subunit (LSU) contains the ribosomal catalytic site termed the peptidyl transferase center (PTC), which catalyzes the formation of peptide bonds, thereby polymerizing the amino acids delivered by tRNAs into a polypeptide chain. The nascent polypeptides leave the ribosome through a tunnel in the LSU and interact with protein factors that function in enzymatic processing, targeting, and the membrane insertion of nascent chains at the exit of the ribosomal tunnel. The protein is Large ribosomal subunit protein eL34A of Saccharomyces cerevisiae (strain ATCC 204508 / S288c) (Baker's yeast).